The following is a 524-amino-acid chain: 2-isopropylmalate synthase (524 aa).

In terms of domain architecture, Pyruvate carboxyltransferase spans V5–H267. D14, H202, H204, and N238 together coordinate Mn(2+). The segment at K392–V524 is regulatory domain.

It belongs to the alpha-IPM synthase/homocitrate synthase family. LeuA type 1 subfamily. In terms of assembly, homodimer. It depends on Mn(2+) as a cofactor.

It is found in the cytoplasm. It carries out the reaction 3-methyl-2-oxobutanoate + acetyl-CoA + H2O = (2S)-2-isopropylmalate + CoA + H(+). It functions in the pathway amino-acid biosynthesis; L-leucine biosynthesis; L-leucine from 3-methyl-2-oxobutanoate: step 1/4. Catalyzes the condensation of the acetyl group of acetyl-CoA with 3-methyl-2-oxobutanoate (2-ketoisovalerate) to form 3-carboxy-3-hydroxy-4-methylpentanoate (2-isopropylmalate). The protein is 2-isopropylmalate synthase of Aeromonas hydrophila subsp. hydrophila (strain ATCC 7966 / DSM 30187 / BCRC 13018 / CCUG 14551 / JCM 1027 / KCTC 2358 / NCIMB 9240 / NCTC 8049).